A 336-amino-acid chain; its full sequence is UPF0324 membrane protein lp_2841 (336 aa).

Transmembrane regions (helical) follow at residues 5-22 (GILP…ISQG), 26-48 (FVPA…NTFL), 84-106 (IGGF…ALWL), 116-138 (VRML…IAPV), 150-172 (ITLV…MAVF), 204-226 (TVQF…VLIF), 255-277 (WYVA…AIIG), 282-304 (TISS…LVNF), and 311-333 (LALY…ITLL).

This sequence belongs to the UPF0324 family.

It localises to the cell membrane. In Lactiplantibacillus plantarum (strain ATCC BAA-793 / NCIMB 8826 / WCFS1) (Lactobacillus plantarum), this protein is UPF0324 membrane protein lp_2841.